The sequence spans 147 residues: Histone H3.X (147 aa).

The segment covering 1 to 16 (MARTKQTARKATAWQA) has biased composition (low complexity). The interval 1–43 (MARTKQTARKATAWQAPRKPLATKAARKRASPTGGIKKPHRYK) is disordered. Position 3 is an asymmetric dimethylarginine (Arg-3). Citrulline; alternate is present on Arg-3. The residue at position 4 (Thr-4) is a Phosphothreonine. Lys-5 is modified (allysine; alternate). Residue Lys-5 is modified to N6,N6,N6-trimethyllysine; alternate. An N6,N6-dimethyllysine; alternate modification is found at Lys-5. An N6-(2-hydroxyisobutyryl)lysine; alternate modification is found at Lys-5. An N6-(beta-hydroxybutyryl)lysine; alternate modification is found at Lys-5. Lys-5 bears the N6-acetyllysine; alternate mark. An N6-crotonyllysine; alternate modification is found at Lys-5. Lys-5 carries the N6-methyllysine; alternate modification. 5-glutamyl dopamine; alternate is present on Gln-6. A 5-glutamyl serotonin; alternate modification is found at Gln-6. Thr-7 is subject to Phosphothreonine. Position 9 is a citrulline; alternate (Arg-9). Residue Arg-9 is modified to Symmetric dimethylarginine. At Lys-10 the chain carries N6,N6,N6-trimethyllysine; alternate. Residue Lys-10 is modified to N6,N6-dimethyllysine; alternate. Lys-10 bears the N6-(2-hydroxyisobutyryl)lysine; alternate mark. N6-(beta-hydroxybutyryl)lysine; alternate is present on Lys-10. N6-acetyllysine; alternate is present on Lys-10. Lys-10 bears the N6-crotonyllysine; alternate mark. Lys-10 bears the N6-methyllysine; alternate mark. Residue Lys-10 is modified to N6-butyryllysine; alternate. The residue at position 10 (Lys-10) is an N6-lactoyllysine; alternate. Thr-12 is modified (phosphothreonine). Residue Arg-18 is modified to Asymmetric dimethylarginine. Arg-18 bears the Citrulline; alternate mark. N6-(2-hydroxyisobutyryl)lysine; alternate is present on residues Lys-19 and Lys-24. N6-(beta-hydroxybutyryl)lysine; alternate occurs at positions 19 and 24. N6-acetyllysine; alternate occurs at positions 19 and 24. N6-crotonyllysine; alternate occurs at positions 19 and 24. Lys-19 and Lys-24 each carry N6-methyllysine; alternate. Residues Lys-19 and Lys-24 each carry the N6-butyryllysine; alternate modification. N6-lactoyllysine; alternate is present on residues Lys-19 and Lys-24. 2 positions are modified to N6-glutaryllysine; alternate: Lys-19 and Lys-24. Citrulline is present on Arg-27. Residues Lys-28 and Lys-37 each carry the N6,N6,N6-trimethyllysine; alternate modification. 2 positions are modified to N6,N6-dimethyllysine; alternate: Lys-28 and Lys-37. N6-(2-hydroxyisobutyryl)lysine; alternate occurs at positions 28 and 37. Lys-28 carries the N6-(beta-hydroxybutyryl)lysine; alternate modification. N6-acetyllysine; alternate is present on residues Lys-28 and Lys-37. N6-crotonyllysine; alternate is present on Lys-28. 2 positions are modified to N6-methyllysine; alternate: Lys-28 and Lys-37. An N6-lactoyllysine; alternate modification is found at Lys-28. An N6-glutaryllysine; alternate modification is found at Lys-28. At Lys-38 the chain carries N6-methyllysine. Tyr-42 carries the post-translational modification Phosphotyrosine. Lys-57 is subject to N6,N6,N6-trimethyllysine; alternate. Residue Lys-57 is modified to N6-(2-hydroxyisobutyryl)lysine; alternate. Lys-57 bears the N6-(beta-hydroxybutyryl)lysine; alternate mark. N6-acetyllysine; alternate is present on Lys-57. Lys-57 is modified (N6-crotonyllysine; alternate). Lys-57 is subject to N6-lactoyllysine; alternate. N6-glutaryllysine; alternate is present on Lys-57. N6-methyllysine is present on Lys-57. Lys-57 is modified (N6-succinyllysine; alternate). The residue at position 58 (Ser-58) is a Phosphoserine. Position 65 is an N6-(2-hydroxyisobutyryl)lysine; alternate (Lys-65). An N6-methyllysine; alternate modification is found at Lys-65. Phosphoserine is present on Ser-87. Thr-108 is subject to Phosphothreonine.

This sequence belongs to the histone H3 family. The nucleosome is a histone octamer containing two molecules each of H2A, H2B, H3 and H4 assembled in one H3-H4 heterotetramer and two H2A-H2B heterodimers. The octamer wraps approximately 147 bp of DNA. Post-translationally, acetylation is generally linked to gene activation. Acetylation on Lys-10 (H3K9ac) impairs methylation at Arg-9 (H3R8me2s). Acetylation on Lys-19 (H3K18ac) and Lys-24 (H3K24ac) favors methylation at Arg-18 (H3R17me). In terms of processing, citrullination at Arg-9 (H3R8ci) and/or Arg-18 (H3R17ci) impairs methylation and represses transcription. Asymmetric dimethylation at Arg-18 (H3R17me2a) is linked to gene activation. Symmetric dimethylation at Arg-9 (H3R8me2s) is linked to gene repression. Asymmetric dimethylation at Arg-3 (H3R2me2a) is linked to gene repression and is mutually exclusive with H3 Lys-5 methylation (H3K4me2 and H3K4me3). H3R2me2a is present at the 3' of genes regardless of their transcription state and is enriched on inactive promoters, while it is absent on active promoters. Post-translationally, methylation at Lys-5 (H3K4me) facilitates subsequent acetylation of H3 and H4. Methylation at Lys-10 (H3K9me) and Lys-28 (H3K27me), which are linked to gene repression, are underrepresented. Methylation at Lys-10 (H3K9me) is a specific target for HP1 proteins (CBX1, CBX3 and CBX5) and prevents subsequent acetylation of H3 and H4. In terms of processing, phosphorylation at Thr-7 (H3T6ph) is a specific tag for epigenetic transcriptional activation that prevents demethylation of Lys-5 (H3K4me) by LSD1/KDM1A. At centromeres, specifically phosphorylated at Thr-12 (H3T11ph) from prophase to early anaphase. Phosphorylation at Thr-12 (H3T11ph) is a specific tag for epigenetic transcriptional activation that promotes demethylation of Lys-10 (H3K9me). Phosphorylation at Tyr-42 (H3Y41ph) promotes exclusion of CBX5 (HP1 alpha) from chromatin. Lysine deamination at Lys-5 (H3K4all) to form allysine. Allysine formation only takes place on H3K4me3 and results in gene repression. Post-translationally, crotonylation (Kcr) is specifically present in male germ cells and marks testis-specific genes in post-meiotic cells, including X-linked genes that escape sex chromosome inactivation in haploid cells. Crotonylation marks active promoters and enhancers and confers resistance to transcriptional repressors. It is also associated with post-meiotically activated genes on autosomes. In terms of processing, butyrylation of histones marks active promoters and competes with histone acetylation. It is present during late spermatogenesis. In terms of tissue distribution, expressed at low level in some tissues, such as testis and brain.

It is found in the nucleus. It localises to the chromosome. Functionally, primate-specific variant histone H3, which constitutes a core component of nucleosomes. Nucleosomes wrap and compact DNA into chromatin, limiting DNA accessibility to the cellular machineries which require DNA as a template. Histones thereby play a central role in transcription regulation, DNA repair, DNA replication and chromosomal stability. DNA accessibility is regulated via a complex set of post-translational modifications of histones, also called histone code, and nucleosome remodeling. This Homo sapiens (Human) protein is Histone H3.X.